The chain runs to 418 residues: Serine hydroxymethyltransferase (418 aa).

(6S)-5,6,7,8-tetrahydrofolate contacts are provided by residues Leu-121 and 125–127 (GHL). An N6-(pyridoxal phosphate)lysine modification is found at Lys-230. 355–357 (SPF) contacts (6S)-5,6,7,8-tetrahydrofolate.

The protein belongs to the SHMT family. As to quaternary structure, homodimer. It depends on pyridoxal 5'-phosphate as a cofactor.

It is found in the cytoplasm. The catalysed reaction is (6R)-5,10-methylene-5,6,7,8-tetrahydrofolate + glycine + H2O = (6S)-5,6,7,8-tetrahydrofolate + L-serine. The protein operates within one-carbon metabolism; tetrahydrofolate interconversion. It functions in the pathway amino-acid biosynthesis; glycine biosynthesis; glycine from L-serine: step 1/1. Catalyzes the reversible interconversion of serine and glycine with tetrahydrofolate (THF) serving as the one-carbon carrier. This reaction serves as the major source of one-carbon groups required for the biosynthesis of purines, thymidylate, methionine, and other important biomolecules. Also exhibits THF-independent aldolase activity toward beta-hydroxyamino acids, producing glycine and aldehydes, via a retro-aldol mechanism. The sequence is that of Serine hydroxymethyltransferase from Streptococcus pneumoniae (strain P1031).